The following is a 196-amino-acid chain: Alpha-crystallin A chain (196 aa).

Met-1 is subject to N-acetylmethionine. Residues 1–63 (MDVTIQHPWF…RTVLDSGISE (63 aa)) form a required for complex formation with BFSP1 and BFSP2 region. Gln-6 carries the post-translational modification Deamidated glutamine; partial. Position 45 is a phosphoserine (Ser-45). Position 50 is a deamidated glutamine; partial (Gln-50). The sHSP domain maps to 76–185 (HAGNPKNNPG…GHSERAIPVS (110 aa)). 2 positions are modified to N6-acetyllysine: Lys-93 and Lys-122. His-123 lines the Zn(2+) pocket. The residue at position 124 (Asn-124) is a Deamidated asparagine; partial. Zn(2+) is bound by residues Glu-125 and His-130. Phosphoserine is present on Ser-145. Asn-146 bears the Deamidated asparagine; partial mark. The interval 168–196 (KVQSGLDAGHSERAIPVSREEKPSSAPSS) is disordered. Residue Gln-170 is modified to Deamidated glutamine; partial. Residues 176–190 (GHSERAIPVSREEKP) show a composition bias toward basic and acidic residues. A Zn(2+)-binding site is contributed by His-177. O-linked (GlcNAc) serine glycosylation occurs at Ser-185.

This sequence belongs to the small heat shock protein (HSP20) family. In terms of assembly, heteropolymer composed of three CRYAA and one CRYAB subunits. Inter-subunit bridging via zinc ions enhances stability, which is crucial as there is no protein turn over in the lens. Can also form homodimers and homotetramers (dimers of dimers) which serve as the building blocks of homooligomers. Within homooligomers, the zinc-binding motif is created from residues of 3 different molecules. His-123 and Glu-125 from one molecule are ligands of the zinc ion, and His-130 and His-177 residues from additional molecules complete the site with tetrahedral coordination geometry. Part of a complex required for lens intermediate filament formation composed of BFSP1, BFSP2 and CRYAA. In terms of processing, acetylation at Lys-93 may increase chaperone activity. Post-translationally, undergoes age-dependent proteolytical cleavage at the C-terminus. Cleavage by m-calpain produces specifically alpha-crystallin A(1-162), cleavage by Capn3/Lp82 produces specifically alpha-crystallin A(1-168) which is the major truncated form during normal maturation and induced cataract formation. Highly expressed in eye lens. Also expressed in non-lenticular tissues such as brain, spleen, liver, lung, skin, small intestine and a several epithelial and fibroblast cell lines with highest levels in spleen.

The protein localises to the cytoplasm. Its subcellular location is the nucleus. In terms of biological role, contributes to the transparency and refractive index of the lens. Acts as a chaperone, preventing aggregation of various proteins under a wide range of stress conditions. Required for the correct formation of lens intermediate filaments as part of a complex composed of BFSP1, BFSP2 and CRYAA. Its function is as follows. Inhibits bacterial growth in the lens. The polypeptide is Alpha-crystallin A chain (Cryaa) (Rattus norvegicus (Rat)).